Reading from the N-terminus, the 280-residue chain is UPF0328 protein ECU06_0020/ECU06_1700 (280 aa).

This sequence belongs to the UPF0328 family.

In Encephalitozoon cuniculi (strain GB-M1) (Microsporidian parasite), this protein is UPF0328 protein ECU06_0020/ECU06_1700.